Reading from the N-terminus, the 441-residue chain is MSIDSLDMEARGVGRLLNEDGTPGKVIFVEGALPGETVSYRSFRRKPSYEQAHLVEVRQESVMRVKPGCQHFGVCGGCSMQHLDSRAQLAIKQRVLEDNLWHLSKVKPDVVFRPIAGPDWGYRYRARLTVRHVAKKGGVLVGFHERKSSYVADMTRCEILPPHVSAMLVPLRELVGGLSIRDRMPQIELAVGQEVTALVLRILEPLTDADKDLLRAFADQHKVQFWLQPKGPDTVYPFYPADAELAYTLPEFGIRMPFKPTDFTQVNHQINRVLIGRALRLLDAQPQDRLLDLFCGIGNFTLPLATQGKSVMGIEGSEALTTRALANAEYNGLAARTEFACRNLFEVTAEDIAALGRFDRWLVDPPREGALAVCKALGELAQQGSNVLPQRIVYVSCSPATLARDAGLLVHGAGYRLAGAGVVNMFPHTSHVESIAVFERG.

The TRAM domain maps to 1-56; sequence MSIDSLDMEARGVGRLLNEDGTPGKVIFVEGALPGETVSYRSFRRKPSYEQAHLVE. Residues Cys69, Cys75, Cys78, and Cys157 each coordinate [4Fe-4S] cluster. Residues Gln265, Phe294, Asn299, Glu315, Asn343, and Asp364 each contribute to the S-adenosyl-L-methionine site. Cys397 serves as the catalytic Nucleophile.

The protein belongs to the class I-like SAM-binding methyltransferase superfamily. RNA M5U methyltransferase family. RlmD subfamily.

The catalysed reaction is uridine(1939) in 23S rRNA + S-adenosyl-L-methionine = 5-methyluridine(1939) in 23S rRNA + S-adenosyl-L-homocysteine + H(+). Catalyzes the formation of 5-methyl-uridine at position 1939 (m5U1939) in 23S rRNA. The sequence is that of 23S rRNA (uracil(1939)-C(5))-methyltransferase RlmD from Cupriavidus necator (strain ATCC 17699 / DSM 428 / KCTC 22496 / NCIMB 10442 / H16 / Stanier 337) (Ralstonia eutropha).